Here is a 433-residue protein sequence, read N- to C-terminus: Probable beta-1,3-galactosyl-O-glycosyl-glycoprotein beta-1,6-N-acetylglucosaminyltransferase 7 (433 aa).

The Cytoplasmic segment spans residues 1-8 (MSQLRTTK). Residues 9 to 25 (AGLVACGMICAFIFLYL) traverse the membrane as a helical; Signal-anchor for type II membrane protein segment. At 26 to 433 (RNPGPEEAEA…QSHFNSQPHH (408 aa)) the chain is on the extracellular side. 4 disulfides stabilise this stretch: Cys57-Cys209, Cys143-Cys358, Cys164-Cys191, and Cys367-Cys398. An N-linked (GlcNAc...) asparagine glycan is attached at Asn112. Residues 233 to 275 (NITPGVTPPANSKPKTGQGPPKPSPDENSYTAPNTIFKQSPPH) form a disordered region. Polar residues predominate over residues 258–275 (DENSYTAPNTIFKQSPPH). Residues 413–433 (VPPEPHWQFPQQSHFNSQPHH) form a disordered region. Residues 421–433 (FPQQSHFNSQPHH) are compositionally biased toward polar residues.

It belongs to the glycosyltransferase 14 family.

Its subcellular location is the golgi apparatus membrane. Its pathway is protein modification; protein glycosylation. Its function is as follows. Probable glycosyltransferase. In Mus musculus (Mouse), this protein is Probable beta-1,3-galactosyl-O-glycosyl-glycoprotein beta-1,6-N-acetylglucosaminyltransferase 7.